The primary structure comprises 121 residues: Small ribosomal subunit protein uS10 (121 aa).

Positions 1–20 are disordered; sequence MTEQKAKSSKTSSEEAKKQK.

This sequence belongs to the universal ribosomal protein uS10 family. In terms of assembly, part of the 30S ribosomal subunit.

Functionally, involved in the binding of tRNA to the ribosomes. In Mycoplasmoides gallisepticum (strain R(low / passage 15 / clone 2)) (Mycoplasma gallisepticum), this protein is Small ribosomal subunit protein uS10.